We begin with the raw amino-acid sequence, 140 residues long: Large ribosomal subunit protein uL22 (140 aa).

The disordered stretch occupies residues 115–140; it reads AKPAAAKKDPKAAAAKADANAGTKEG.

This sequence belongs to the universal ribosomal protein uL22 family. As to quaternary structure, part of the 50S ribosomal subunit.

Its function is as follows. This protein binds specifically to 23S rRNA; its binding is stimulated by other ribosomal proteins, e.g. L4, L17, and L20. It is important during the early stages of 50S assembly. It makes multiple contacts with different domains of the 23S rRNA in the assembled 50S subunit and ribosome. In terms of biological role, the globular domain of the protein is located near the polypeptide exit tunnel on the outside of the subunit, while an extended beta-hairpin is found that lines the wall of the exit tunnel in the center of the 70S ribosome. This Heliobacterium modesticaldum (strain ATCC 51547 / Ice1) protein is Large ribosomal subunit protein uL22.